The primary structure comprises 156 residues: MAKKSGEGQKIISDNRQARFNYHIIETYEAGVALQGTEVKSIREGKVNLRDGYALIRNNEAWLLNVHISPYQKAGDFFNHEPRRSRRLLLHKQEIRKLIGKVEQQGLTLVPLRMYFKRGWVKVDIALAQGKKLYDKRETIKRRDDKRAMQRAIKQY.

It belongs to the SmpB family.

The protein resides in the cytoplasm. Required for rescue of stalled ribosomes mediated by trans-translation. Binds to transfer-messenger RNA (tmRNA), required for stable association of tmRNA with ribosomes. tmRNA and SmpB together mimic tRNA shape, replacing the anticodon stem-loop with SmpB. tmRNA is encoded by the ssrA gene; the 2 termini fold to resemble tRNA(Ala) and it encodes a 'tag peptide', a short internal open reading frame. During trans-translation Ala-aminoacylated tmRNA acts like a tRNA, entering the A-site of stalled ribosomes, displacing the stalled mRNA. The ribosome then switches to translate the ORF on the tmRNA; the nascent peptide is terminated with the 'tag peptide' encoded by the tmRNA and targeted for degradation. The ribosome is freed to recommence translation, which seems to be the essential function of trans-translation. This Trichodesmium erythraeum (strain IMS101) protein is SsrA-binding protein.